A 244-amino-acid polypeptide reads, in one-letter code: Phosphoadenosine 5'-phosphosulfate reductase (244 aa).

Cys239 functions as the Nucleophile; cysteine thiosulfonate intermediate in the catalytic mechanism.

Belongs to the PAPS reductase family. CysH subfamily.

The protein localises to the cytoplasm. It catalyses the reaction [thioredoxin]-disulfide + sulfite + adenosine 3',5'-bisphosphate + 2 H(+) = [thioredoxin]-dithiol + 3'-phosphoadenylyl sulfate. It participates in sulfur metabolism; hydrogen sulfide biosynthesis; sulfite from sulfate: step 3/3. Catalyzes the formation of sulfite from phosphoadenosine 5'-phosphosulfate (PAPS) using thioredoxin as an electron donor. This Salmonella choleraesuis (strain SC-B67) protein is Phosphoadenosine 5'-phosphosulfate reductase.